Here is a 304-residue protein sequence, read N- to C-terminus: Acetaldehyde dehydrogenase 4 (304 aa).

The Acyl-thioester intermediate role is filled by cysteine 131. NAD(+)-binding positions include 162–170 (SAGPGTRKN) and asparagine 273.

This sequence belongs to the acetaldehyde dehydrogenase family. As to quaternary structure, heterotetramer composed of two BphI (aldolase) and two BphJ (dehydrogenase).

The enzyme catalyses acetaldehyde + NAD(+) + CoA = acetyl-CoA + NADH + H(+). It carries out the reaction propanal + NAD(+) + CoA = propanoyl-CoA + NADH + H(+). It functions in the pathway xenobiotic degradation; polychlorinated biphenyl degradation. Its activity is regulated as follows. Bound pyruvate or other intermediates in the aldol addition reaction catalyzed by BphI allosterically activates BphJ reductive deacylation activity. Functionally, catalyzes the conversion of acetaldehyde or propanal to acetyl-CoA or propanoyl-CoA, respectively, using NAD(+) and coenzyme A. Displays broad specificity since it can utilize aliphatic aldehydes from two to five carbons in length as substrates; the aldehyde substrates can be directly channeled from the aldolase BphI to the dehydrogenase BphJ. Is the final enzyme in the meta-cleavage pathway for the degradation of polychlorinated biphenyls (PCBs). Is also able to utilize NADP(+) instead of NAD(+). Is not active with succinic semialdehyde or picolinaldehyde as substrates. Can also catalyze the reverse reaction, i.e. the reductive deacylation of acetyl-CoA to acetaldehyde, which is then channeled to the BphI active site. The BphI-BphJ enzyme complex exhibits unique bidirectionality in substrate channeling and allosteric activation. The chain is Acetaldehyde dehydrogenase 4 (bphJ) from Paraburkholderia xenovorans (strain LB400).